The primary structure comprises 170 residues: Nucleoside-triphosphatase THEP1 (170 aa).

ATP-binding positions include 7–14 and 98–105; these read GMPGVGKT and IIIIDELG.

It belongs to the THEP1 NTPase family.

The catalysed reaction is a ribonucleoside 5'-triphosphate + H2O = a ribonucleoside 5'-diphosphate + phosphate + H(+). Its function is as follows. Has nucleotide phosphatase activity towards ATP, GTP, CTP, TTP and UTP. May hydrolyze nucleoside diphosphates with lower efficiency. The sequence is that of Nucleoside-triphosphatase THEP1 from Methanocaldococcus jannaschii (strain ATCC 43067 / DSM 2661 / JAL-1 / JCM 10045 / NBRC 100440) (Methanococcus jannaschii).